Here is a 502-residue protein sequence, read N- to C-terminus: Thermosome subunit beta (502 aa).

The protein belongs to the TCP-1 chaperonin family. Forms a Heterooligomeric complex of two stacked eight-membered rings.

Molecular chaperone; binds unfolded polypeptides in vitro, and has a weak ATPase activity. The protein is Thermosome subunit beta (thsB) of Desulfurococcus mucosus (Desulfurococcus mobilis).